The following is a 570-amino-acid chain: MDKKAREYAQDALKFIQRSGSNFLACKNLKERLENNGFINLSEGETWNLNKNEGYVLCKENRNICGFFVGKNFNIDTGSILISIGHIDSCALKISPNNNVIKKKIHQINVECYGSGLWHTWFDRSLGLSGQVLYKKGNKLVEKLIQINKSVLFLPSLAIHLQNRTRYDFSVKINYENHIKPIISTTLFNQLNKCKRNNVHHDTILTTDTKFSHKENSQNKRDDQMCHSFNDKDVSNHNLDKNTIEHLTNQQNEEKNKHTKDNPNSKDIVEHINTDNSYPLLYLLSKELNCKEEDILDFELCLMDTQEPCFTGVYEEFIEGARFDNLLGSFCVFEGFIELVNSIKNHTSNENTNHTNNITNDINDNIHNNLYISIGYDHEEIGSLSEVGARSYCTKNFIDRIISSVFKKEIHEKNLSVQEIYGNLVNRSFILNVDMAHCSHPNYPETVQDNHQLFFHEGIAIKYNTNKNYVTSPLHASLIKRTFELYYNKYKQQIKYQNFMVKNDTPCGSTVGSMVAANLSMPGIDIGIPQLAMHSIREIAAVHDVFFLIKGVFAFYTYYNQVLSTCVHDK.

Zn(2+) is bound at residue His86. His160 provides a ligand contact to substrate. Asp324 provides a ligand contact to Zn(2+). Position 379 (Glu379) interacts with substrate. Residues Glu380 and Asp434 each coordinate Zn(2+). Residues Asp434, His437, Lys462, and Tyr469 each coordinate substrate. His534 contacts Zn(2+).

The protein belongs to the peptidase M18 family. As to quaternary structure, homododecamer composed of homodimers and homotrimers that assemble into a tetrahedron shape to create a central tunnel containing the active sites. Homooctamer. Zn(2+) serves as cofactor.

The protein localises to the cytoplasm. The enzyme catalyses Release of an N-terminal aspartate or glutamate from a peptide, with a preference for aspartate.. Activated by Co(2+). Inhibited by high concentrations (&gt;1mM) of Zn(2+). In terms of biological role, aminopeptidase which specifically catalyzes the removal of glutamic acid or aspartic acid residues from the N-terminus of peptides. May play a role in the final step of host hemoglobin catabolism, by cleaving hemoglobin-derived oligopeptides in the cytoplasm. This is Aspartyl aminopeptidase from Plasmodium falciparum (isolate 3D7).